A 298-amino-acid polypeptide reads, in one-letter code: uncharacterized protein (298 aa).

This is an uncharacterized protein from Archaeoglobus fulgidus (strain ATCC 49558 / DSM 4304 / JCM 9628 / NBRC 100126 / VC-16).